The chain runs to 136 residues: Acidic phospholipase A2 CC-PLA2-2 (136 aa).

The N-terminal stretch at 1 to 16 (MRTLWIVAVWLMGVEG) is a signal peptide. 7 cysteine pairs are disulfide-bonded: C42–C129, C44–C60, C59–C109, C65–C136, C66–C102, C73–C95, and C90–C100. Positions 43, 45, and 47 each coordinate Ca(2+). H63 is an active-site residue. D64 provides a ligand contact to Ca(2+). D103 is a catalytic residue.

Belongs to the phospholipase A2 family. Group II subfamily. D49 sub-subfamily. Ca(2+) is required as a cofactor. Glycosylated (2.5%). In terms of tissue distribution, expressed by the venom gland.

The protein localises to the secreted. It catalyses the reaction a 1,2-diacyl-sn-glycero-3-phosphocholine + H2O = a 1-acyl-sn-glycero-3-phosphocholine + a fatty acid + H(+). Functionally, snake venom phospholipase A2 that inhibits blood coagulation and platelet aggregation induced by ADP and arachidonic acid. Inhibits tumor cell adhesion and migration in a dose-dependent manner. Abolishes the attachment of human brain microvascular endothelial cells (HBMEC) to fibrinogen (IC(50)=0.2 uM) and dramatically reduces its adhesion to fibronectin (IC(50)=0.3 uM), whereas no effect is observed on type I collagen, vitronectin or laminin 1. Also blocks the cell migration toward fibronectin and fibrinogen. These effects are not dependent of the catalytic activity, but are mediated by alpha-5/beta-1 (ITGA5/ITGB1) and alpha-v-containing (ITGAV) integrins. Also shows anti-angiogenic activity in chicken chorioallantoix membrane assay. Has a relatively high enzymatic activity. PLA2 catalyzes the calcium-dependent hydrolysis of the 2-acyl groups in 3-sn-phosphoglycerides. The sequence is that of Acidic phospholipase A2 CC-PLA2-2 from Cerastes cerastes (Horned desert viper).